The sequence spans 390 residues: 8-amino-7-oxononanoate synthase (390 aa).

Residue Arg19 participates in substrate binding. Pyridoxal 5'-phosphate is bound at residue 106–107 (GY). His131 contributes to the substrate binding site. Residues Ser176, His204, and Thr233 each coordinate pyridoxal 5'-phosphate. Lys236 is modified (N6-(pyridoxal phosphate)lysine). Position 350 (Thr350) interacts with substrate.

It belongs to the class-II pyridoxal-phosphate-dependent aminotransferase family. BioF subfamily. As to quaternary structure, homodimer. Pyridoxal 5'-phosphate serves as cofactor.

The enzyme catalyses 6-carboxyhexanoyl-[ACP] + L-alanine + H(+) = (8S)-8-amino-7-oxononanoate + holo-[ACP] + CO2. It functions in the pathway cofactor biosynthesis; biotin biosynthesis. In terms of biological role, catalyzes the decarboxylative condensation of pimeloyl-[acyl-carrier protein] and L-alanine to produce 8-amino-7-oxononanoate (AON), [acyl-carrier protein], and carbon dioxide. The protein is 8-amino-7-oxononanoate synthase of Pseudomonas entomophila (strain L48).